Consider the following 456-residue polypeptide: Bifunctional protein GlmU (456 aa).

Positions 1-228 (MPQNTLNIVI…SHLAAGVNNK (228 aa)) are pyrophosphorylase. Residues 11-14 (LAAG), Lys-25, Gln-75, 80-81 (GT), 102-104 (YGD), Gly-138, Glu-153, Asn-168, and Asn-226 each bind UDP-N-acetyl-alpha-D-glucosamine. Asp-104 contributes to the Mg(2+) binding site. Asn-226 contributes to the Mg(2+) binding site. The linker stretch occupies residues 229–249 (LQLAELERIFQTEQAQELLKA). The N-acetyltransferase stretch occupies residues 250-456 (GVTLRDPARF…GWVRPEKNKQ (207 aa)). Residues Arg-332 and Lys-350 each coordinate UDP-N-acetyl-alpha-D-glucosamine. His-362 (proton acceptor) is an active-site residue. UDP-N-acetyl-alpha-D-glucosamine contacts are provided by Tyr-365 and Asn-376. Acetyl-CoA contacts are provided by residues Ala-379, 385–386 (NY), Ser-404, Ala-422, and Arg-439.

In the N-terminal section; belongs to the N-acetylglucosamine-1-phosphate uridyltransferase family. It in the C-terminal section; belongs to the transferase hexapeptide repeat family. Homotrimer. Mg(2+) serves as cofactor.

Its subcellular location is the cytoplasm. It carries out the reaction alpha-D-glucosamine 1-phosphate + acetyl-CoA = N-acetyl-alpha-D-glucosamine 1-phosphate + CoA + H(+). The enzyme catalyses N-acetyl-alpha-D-glucosamine 1-phosphate + UTP + H(+) = UDP-N-acetyl-alpha-D-glucosamine + diphosphate. The protein operates within nucleotide-sugar biosynthesis; UDP-N-acetyl-alpha-D-glucosamine biosynthesis; N-acetyl-alpha-D-glucosamine 1-phosphate from alpha-D-glucosamine 6-phosphate (route II): step 2/2. It participates in nucleotide-sugar biosynthesis; UDP-N-acetyl-alpha-D-glucosamine biosynthesis; UDP-N-acetyl-alpha-D-glucosamine from N-acetyl-alpha-D-glucosamine 1-phosphate: step 1/1. Its pathway is bacterial outer membrane biogenesis; LPS lipid A biosynthesis. Catalyzes the last two sequential reactions in the de novo biosynthetic pathway for UDP-N-acetylglucosamine (UDP-GlcNAc). The C-terminal domain catalyzes the transfer of acetyl group from acetyl coenzyme A to glucosamine-1-phosphate (GlcN-1-P) to produce N-acetylglucosamine-1-phosphate (GlcNAc-1-P), which is converted into UDP-GlcNAc by the transfer of uridine 5-monophosphate (from uridine 5-triphosphate), a reaction catalyzed by the N-terminal domain. This is Bifunctional protein GlmU from Neisseria meningitidis serogroup A / serotype 4A (strain DSM 15465 / Z2491).